We begin with the raw amino-acid sequence, 457 residues long: Mannose-6-phosphate isomerase (457 aa).

Q108, H110, E135, and H292 together coordinate Zn(2+). R311 is an active-site residue.

It belongs to the mannose-6-phosphate isomerase type 1 family. Zn(2+) serves as cofactor.

The protein resides in the cytoplasm. It carries out the reaction D-mannose 6-phosphate = D-fructose 6-phosphate. It participates in nucleotide-sugar biosynthesis; GDP-alpha-D-mannose biosynthesis; alpha-D-mannose 1-phosphate from D-fructose 6-phosphate: step 1/2. In terms of biological role, involved in the synthesis of the GDP-mannose and dolichol-phosphate-mannose required for a number of critical mannosyl transfer reactions. The sequence is that of Mannose-6-phosphate isomerase (pmi1) from Aspergillus fumigatus (strain ATCC MYA-4609 / CBS 101355 / FGSC A1100 / Af293) (Neosartorya fumigata).